The primary structure comprises 293 residues: Undecaprenyl-diphosphatase (293 aa).

A run of 7 helical transmembrane segments spans residues 57-77, 106-126, 134-154, 172-192, 212-232, 239-259, and 268-288; these read PGVS…IVYF, LAIA…KLFW, IRSL…LALA, GFVV…RSGS, FLLG…DAFA, VLPL…AIDW, and STWI…AWWL.

It belongs to the UppP family.

The protein localises to the cell inner membrane. It carries out the reaction di-trans,octa-cis-undecaprenyl diphosphate + H2O = di-trans,octa-cis-undecaprenyl phosphate + phosphate + H(+). Functionally, catalyzes the dephosphorylation of undecaprenyl diphosphate (UPP). Confers resistance to bacitracin. In Prochlorococcus marinus (strain MIT 9303), this protein is Undecaprenyl-diphosphatase.